The sequence spans 420 residues: Polymerase delta-interacting protein 3 (420 aa).

A2 bears the N-acetylalanine mark. At S5 the chain carries Phosphoserine. R33 is subject to Omega-N-methylarginine. Position 127 is a phosphoserine (S127). The residue at position 140 (T140) is a Phosphothreonine. A Glycyl lysine isopeptide (Lys-Gly) (interchain with G-Cter in SUMO2) cross-link involves residue K200. S215 and S217 each carry phosphoserine. A Glycyl lysine isopeptide (Lys-Gly) (interchain with G-Cter in SUMO2) cross-link involves residue K223. S244 is modified (phosphoserine). A Glycyl lysine isopeptide (Lys-Gly) (interchain with G-Cter in SUMO2) cross-link involves residue K248. The tract at residues 256–277 (TLVNKEEPPKELPPAEPVLSPL) is disordered. The residue at position 275 (S275) is a Phosphoserine. The 72-residue stretch at 280 to 351 (TKMTVNNLHP…QPMKCNLHMN (72 aa)) folds into the RRM domain. Residues 369-394 (PSVKKESELPRRGNPASSNPPAEVDP) form a disordered region. Residues 370–379 (SVKKESELPR) are compositionally biased toward basic and acidic residues. K372 is covalently cross-linked (Glycyl lysine isopeptide (Lys-Gly) (interchain with G-Cter in SUMO2)). The residue at position 385 (S385) is a Phosphoserine. A Glycyl lysine isopeptide (Lys-Gly) (interchain with G-Cter in SUMO2) cross-link involves residue K417.

As to quaternary structure, interacts with POLD2. Interacts with NCBP1 and EIF4A3. Associates with the multiprotein exon junction complex (EJC). Interacts with RPS6KB1 (activated). Interacts with ERH. Interacts with THOC2, DDX39B and ZC3H11A; the interactions are ATP-dependent and indicative for an association with the TREX complex.

The protein resides in the nucleus. The protein localises to the nucleus speckle. It localises to the cytoplasm. In terms of biological role, is involved in regulation of translation. Is preferentially associated with CBC-bound spliced mRNA-protein complexes during the pioneer round of mRNA translation. Contributes to enhanced translational efficiency of spliced over nonspliced mRNAs. Recruits activated ribosomal protein S6 kinase beta-1 I/RPS6KB1 to newly synthesized mRNA. Involved in nuclear mRNA export; probably mediated by association with the TREX complex. The sequence is that of Polymerase delta-interacting protein 3 (Poldip3) from Mus musculus (Mouse).